Here is a 1841-residue protein sequence, read N- to C-terminus: Sucrase-isomaltase, intestinal (1841 aa).

At 1 to 12 (MAKKKFSALEIS) the chain is on the cytoplasmic side. Ser7 bears the Phosphoserine; by PKA mark. Residues 13–32 (LIVLFIIVTAIAIALVTVLA) form a helical; Signal-anchor for type II membrane protein membrane-spanning segment. Topologically, residues 33–1841 (TKVPAVEEIK…LDEPIQITWS (1809 aa)) are lumenal. Residues 42-81 (KSPTPTSNSTPTSTPTSTSTPTSTSTPSPGKCPPEQGEPI) are disordered. A compositionally biased stretch (low complexity) spans 43 to 70 (SPTPTSNSTPTSTPTSTSTPTSTSTPSP). The region spanning 71–120 (GKCPPEQGEPINERINCIPEQHPTKAICEERGCCWRPWNNTVIPWCFFAD) is the P-type 1 domain. 3 disulfides stabilise this stretch: Cys73/Cys104, Cys87/Cys103, and Cys98/Cys116. An N-linked (GlcNAc...) asparagine glycan is attached at Asn109. The interval 120-1013 (DNHGYNAESI…ELQLNPPNAR (894 aa)) is isomaltase. Positions 274 and 398 each coordinate substrate. Sulfotyrosine is present on residues Tyr401 and Tyr410. An N-linked (GlcNAc...) asparagine glycan is attached at Asn464. Residue Asp514 is the Nucleophile; for isomaltase activity of the active site. Substrate is bound at residue Arg599. Asp615 (for isomaltase activity) is an active-site residue. Cys646 and Cys657 are joined by a disulfide. Substrate is bound at residue His673. Residues Asn758, Asn765, Asn867, and Asn910 are each glycosylated (N-linked (GlcNAc...) asparagine). The 49-residue stretch at 936–984 (RWCRTFSDNEKFTCYPDVGTATEGTCTQRGCLWQPVSGLSNVPPYYFPP) folds into the P-type 2 domain. The tract at residues 1014–1841 (IKLPSNPIST…LDEPIQITWS (828 aa)) is sucrase. N-linked (GlcNAc...) asparagine glycosylation is found at Asn1240, Asn1308, Asn1345, Asn1359, and Asn1373. Tyr1387 bears the Sulfotyrosine mark. The Nucleophile; for sucrase activity role is filled by Asp1399. The active-site For sucrase activity is Glu1402. The N-linked (GlcNAc...) asparagine glycan is linked to Asn1485. Asp1512 acts as the Proton donor; for sucrase activity in catalysis. 4 N-linked (GlcNAc...) asparagine glycosylation sites follow: Asn1513, Asn1575, Asn1762, and Asn1829.

It belongs to the glycosyl hydrolase 31 family. The resulting sucrase and isomaltase subunits stay associated with one another in a complex by non-covalent linkages. The precursor is proteolytically cleaved when exposed to pancreatic proteases in the intestinal lumen. Post-translationally, sulfated.

It is found in the apical cell membrane. The catalysed reaction is Hydrolysis of sucrose and maltose by an alpha-D-glucosidase-type action.. It carries out the reaction Hydrolysis of (1-&gt;6)-alpha-D-glucosidic linkages in some oligosaccharides produced from starch and glycogen by alpha-amylase, and in isomaltose.. In terms of biological role, plays an important role in the final stage of carbohydrate digestion. Isomaltase activity is specific for both alpha-1,4- and alpha-1,6-oligosaccharides. The chain is Sucrase-isomaltase, intestinal (Si) from Rattus norvegicus (Rat).